We begin with the raw amino-acid sequence, 217 residues long: Lipoprotein CseA (217 aa).

The N-terminal stretch at 1 to 34 is a signal peptide; sequence MRGLGTESLRARGALKAAIAAVAGLAVLGLSVSA. A lipid anchor (N-palmitoyl cysteine) is attached at Cys-35. Cys-35 carries the S-diacylglycerol cysteine lipid modification. Disordered regions lie at residues 39–66 and 192–217; these read GTGA…SPSK and FSEE…PAPN.

It is found in the cell membrane. Functionally, may be involved in the stabilization of the cell envelope or may interact with the sensor protein CseC to modulate its activity, in response to cell envelope stress. This is Lipoprotein CseA (cseA) from Streptomyces avermitilis (strain ATCC 31267 / DSM 46492 / JCM 5070 / NBRC 14893 / NCIMB 12804 / NRRL 8165 / MA-4680).